Here is an 852-residue protein sequence, read N- to C-terminus: Lon protease homolog 2, peroxisomal (852 aa).

An N-acetylserine modification is found at serine 2. Residues 13–222 enclose the Lon N-terminal domain; sequence LPLLLTHEGV…MTIPLLVRQI (210 aa). ATP is bound at residue 375 to 382; it reads GPPGVGKT. Residues 651-837 form the Lon proteolytic domain; sequence LSQPGVAIGL…DEVLNAAFDG (187 aa). Residues serine 743 and lysine 786 contribute to the active site. Residues 850–852 carry the Microbody targeting signal motif; that stretch reads SKL.

The protein belongs to the peptidase S16 family. Interacts with PEX5. Interacts with TYSND1. May interact with enzymes involved in beta-oxidation of fatty acids, including ACOX1/AOX.

The protein localises to the peroxisome matrix. It catalyses the reaction Hydrolysis of proteins in presence of ATP.. Its function is as follows. ATP-dependent serine protease that mediates the selective degradation of misfolded and unassembled polypeptides in the peroxisomal matrix. Necessary for type 2 peroxisome targeting signal (PTS2)-containing protein processing and facilitates peroxisome matrix protein import. May indirectly regulate peroxisomal fatty acid beta-oxidation through degradation of the self-processed forms of TYSND1. The chain is Lon protease homolog 2, peroxisomal from Pongo abelii (Sumatran orangutan).